The sequence spans 308 residues: Acetyl-coenzyme A carboxylase carboxyl transferase subunit beta 1 (308 aa).

The CoA carboxyltransferase N-terminal domain occupies 25–294 (VWTKCTSCEQ…PMVVSVNESP (270 aa)). Positions 29, 32, 48, and 51 each coordinate Zn(2+). The segment at 29 to 51 (CTSCEQVLYHAELERNLEVCPKC) adopts a C4-type zinc-finger fold. Residues 289-308 (SVNESPNEEPYSVPEADEKG) form a disordered region.

Belongs to the AccD/PCCB family. As to quaternary structure, acetyl-CoA carboxylase is a heterohexamer composed of biotin carboxyl carrier protein (AccB), biotin carboxylase (AccC) and two subunits each of ACCase subunit alpha (AccA) and ACCase subunit beta (AccD). Zn(2+) is required as a cofactor.

Its subcellular location is the cytoplasm. The enzyme catalyses N(6)-carboxybiotinyl-L-lysyl-[protein] + acetyl-CoA = N(6)-biotinyl-L-lysyl-[protein] + malonyl-CoA. Its pathway is lipid metabolism; malonyl-CoA biosynthesis; malonyl-CoA from acetyl-CoA: step 1/1. Component of the acetyl coenzyme A carboxylase (ACC) complex. Biotin carboxylase (BC) catalyzes the carboxylation of biotin on its carrier protein (BCCP) and then the CO(2) group is transferred by the transcarboxylase to acetyl-CoA to form malonyl-CoA. The protein is Acetyl-coenzyme A carboxylase carboxyl transferase subunit beta 1 of Vibrio campbellii (strain ATCC BAA-1116).